Reading from the N-terminus, the 572-residue chain is Proline--tRNA ligase (572 aa).

It belongs to the class-II aminoacyl-tRNA synthetase family. ProS type 1 subfamily. Homodimer.

The protein localises to the cytoplasm. The enzyme catalyses tRNA(Pro) + L-proline + ATP = L-prolyl-tRNA(Pro) + AMP + diphosphate. In terms of biological role, catalyzes the attachment of proline to tRNA(Pro) in a two-step reaction: proline is first activated by ATP to form Pro-AMP and then transferred to the acceptor end of tRNA(Pro). As ProRS can inadvertently accommodate and process non-cognate amino acids such as alanine and cysteine, to avoid such errors it has two additional distinct editing activities against alanine. One activity is designated as 'pretransfer' editing and involves the tRNA(Pro)-independent hydrolysis of activated Ala-AMP. The other activity is designated 'posttransfer' editing and involves deacylation of mischarged Ala-tRNA(Pro). The misacylated Cys-tRNA(Pro) is not edited by ProRS. The chain is Proline--tRNA ligase from Alteromonas mediterranea (strain DSM 17117 / CIP 110805 / LMG 28347 / Deep ecotype).